Reading from the N-terminus, the 676-residue chain is Probable LRR receptor-like serine/threonine-protein kinase At4g31250 (676 aa).

The first 26 residues, Met-1–Gly-26, serve as a signal peptide directing secretion. Over Asp-27–Pro-242 the chain is Extracellular. 3 N-linked (GlcNAc...) asparagine glycosylation sites follow: Asn-42, Asn-73, and Asn-83. LRR repeat units lie at residues Ile-98–Leu-122, Val-123–Gly-146, Lys-148–Leu-171, Pro-172–Asn-195, and Val-197–Asn-218. Asn-218 is a glycosylation site (N-linked (GlcNAc...) asparagine). The helical transmembrane segment at Phe-243–Phe-263 threads the bilayer. Residues Leu-264–Met-676 are Cytoplasmic-facing. Residues Thr-319 to Ala-330 are compositionally biased toward polar residues. The tract at residues Thr-319 to Arg-347 is disordered. The Protein kinase domain maps to Arg-366–Val-640. Ser-368 bears the Phosphoserine mark. Residues Leu-372–Ser-380 and Lys-394 each bind ATP. 2 positions are modified to phosphoserine: Ser-446 and Ser-543. The segment at Asp-641–Met-676 is disordered.

The protein belongs to the protein kinase superfamily. Ser/Thr protein kinase family.

The protein resides in the membrane. It catalyses the reaction L-seryl-[protein] + ATP = O-phospho-L-seryl-[protein] + ADP + H(+). It carries out the reaction L-threonyl-[protein] + ATP = O-phospho-L-threonyl-[protein] + ADP + H(+). This chain is Probable LRR receptor-like serine/threonine-protein kinase At4g31250, found in Arabidopsis thaliana (Mouse-ear cress).